The following is a 248-amino-acid chain: Tropomyosin alpha-4 chain (248 aa).

Alanine 2 is modified (N-acetylalanine). Residues 2-248 adopt a coiled-coil conformation; sequence AGLNSLEAVK…DQTLNELNCI (247 aa). Serine 6 bears the Phosphoserine mark. The disordered stretch occupies residues 15-47; sequence QALQQQADEAEDRAQGLQRELDGERERREKAEG. A compositionally biased stretch (basic and acidic residues) spans 33–47; that stretch reads RELDGERERREKAEG. N6-acetyllysine is present on residues lysine 177 and lysine 215. Phosphothreonine is present on threonine 216.

This sequence belongs to the tropomyosin family. In terms of assembly, homodimer. Heterodimer of an alpha (TPM1, TPM3 or TPM4) and a beta (TPM2) chain. As to expression, detected in cardiac tissue and platelets, the form found in cardiac tissue is a higher molecular weight than the form found in platelets. Expressed at higher levels in the platelets of hypertensive patients with cardiac hypertrophy than in the platelets of hypertensive patients without cardiac hypertrophy (at protein level).

The protein localises to the cytoplasm. It is found in the cytoskeleton. Binds to actin filaments in muscle and non-muscle cells. Plays a central role, in association with the troponin complex, in the calcium dependent regulation of vertebrate striated muscle contraction. Smooth muscle contraction is regulated by interaction with caldesmon. In non-muscle cells is implicated in stabilizing cytoskeleton actin filaments. Binds calcium. Plays a role in platelet biogenesis. The protein is Tropomyosin alpha-4 chain (TPM4) of Homo sapiens (Human).